Consider the following 235-residue polypeptide: Ribonuclease 3 (235 aa).

Residues 6–131 (IDQLEKLTGH…LIAVIYLDGG (126 aa)) enclose the RNase III domain. Glutamate 44 lines the Mg(2+) pocket. Residue aspartate 48 is part of the active site. Residues aspartate 117 and glutamate 120 each contribute to the Mg(2+) site. Glutamate 120 is a catalytic residue. In terms of domain architecture, DRBM spans 156–225 (DAKTQLQEWA…AEKILRREGI (70 aa)).

It belongs to the ribonuclease III family. As to quaternary structure, homodimer. Mg(2+) serves as cofactor.

It is found in the cytoplasm. The catalysed reaction is Endonucleolytic cleavage to 5'-phosphomonoester.. Functionally, digests double-stranded RNA. Involved in the processing of primary rRNA transcript to yield the immediate precursors to the large and small rRNAs (23S and 16S). Processes some mRNAs, and tRNAs when they are encoded in the rRNA operon. Processes pre-crRNA and tracrRNA of type II CRISPR loci if present in the organism. This chain is Ribonuclease 3, found in Bartonella henselae (strain ATCC 49882 / DSM 28221 / CCUG 30454 / Houston 1) (Rochalimaea henselae).